A 643-amino-acid polypeptide reads, in one-letter code: Threonine--tRNA ligase (643 aa).

The region spanning 1 to 61 is the TGS domain; sequence MIKITLKDGS…NEDSSLEICT (61 aa). A catalytic region spans residues 240 to 540; it reads DHNKLGRELG…LIEKYAGALP (301 aa). Zn(2+) is bound by residues Cys-335, His-386, and His-517.

This sequence belongs to the class-II aminoacyl-tRNA synthetase family. As to quaternary structure, homodimer. Requires Zn(2+) as cofactor.

Its subcellular location is the cytoplasm. It carries out the reaction tRNA(Thr) + L-threonine + ATP = L-threonyl-tRNA(Thr) + AMP + diphosphate + H(+). In terms of biological role, catalyzes the attachment of threonine to tRNA(Thr) in a two-step reaction: L-threonine is first activated by ATP to form Thr-AMP and then transferred to the acceptor end of tRNA(Thr). Also edits incorrectly charged L-seryl-tRNA(Thr). The protein is Threonine--tRNA ligase of Clostridium perfringens (strain SM101 / Type A).